The primary structure comprises 488 residues: Protein kinase C and casein kinase substrate in neurons 2 protein (488 aa).

Residues 11 to 282 (VEVSSDSFWE…SIKAADAVED (272 aa)) enclose the F-BAR domain. Positions 25–274 (KRTVKRIDDG…GIYRELEQSI (250 aa)) form a coiled coil. Lys-53 is subject to N6-acetyllysine. Residues 163 to 176 (CKEEKLAVSREANS) are compositionally biased toward basic and acidic residues. Residues 163-183 (CKEEKLAVSREANSKADPSLN) are disordered. Phosphoserine is present on Ser-273. Ser-315 carries the post-translational modification Phosphoserine; by PKC. The disordered stretch occupies residues 316-429 (RREKKKAADG…PFDEDTTSGT (114 aa)). A compositionally biased stretch (polar residues) spans 329–364 (TGINQTGDQSGQNKPSSNLSVPSNPAQSTQLQSSYN). An NPF1 motif is present at residues 364–366 (NPF). Ser-375 carries the phosphoserine; by IKKB modification. Polar residues predominate over residues 386 to 396 (NVSSYEKTQNY). Ser-401 carries the phosphoserine modification. Positions 406–418 (NNPFSSTDANGDS) are enriched in polar residues. Residues 407–409 (NPF) carry the NPF2 motif. Residues 419–421 (NPF) carry the NPF3 motif. The 61-residue stretch at 428 to 488 (GTEVRVRALY…YPANYVEAIQ (61 aa)) folds into the SH3 domain. Phosphoserine is present on Ser-448.

The protein belongs to the PACSIN family. In terms of assembly, homodimer. May form heterooligomers with other PACSINs. Interacts (via NPF motifs) with EHD1 (via EH domain). Interacts with EHD3. Interacts (via the SH3 domain) with MICALL1. Interacts with RAC1. Interacts (via SH3 domain) with DNM1, SYN1, SYNJ1 and WASL. Interacts with CAV1. Interacts with TRPV4. Forms a complex with EHD4 and MICALL1; the complex controls CDH5 trafficking and coordinates angiogenesis. Post-translationally, phosphorylated by casein kinase 2 (CK2) and protein kinase C (PKC). Phosphorylation by PKC probably decreases the membrane binding and tubulation capacities of PACSIN2, thereby modulating the lifetime of caveolae. Widely expressed (at protein level). Isoforms 1/3 are predominantly expressed in heart and in PC-12 cells, a pheochromocytoma cell line (at protein level). Isoforms 2/4 are widely expressed with highest levels in muscle, testis and brain (at protein level).

The protein localises to the cytoplasm. Its subcellular location is the cytoskeleton. It is found in the cytoplasmic vesicle membrane. The protein resides in the cell projection. It localises to the ruffle membrane. The protein localises to the early endosome. Its subcellular location is the recycling endosome membrane. It is found in the cell membrane. The protein resides in the membrane. It localises to the caveola. The protein localises to the cell junction. Its subcellular location is the adherens junction. Its function is as follows. Regulates the morphogenesis and endocytosis of caveolae. Lipid-binding protein that is able to promote the tubulation of the phosphatidic acid-containing membranes it preferentially binds. Plays a role in intracellular vesicle-mediated transport. Involved in the endocytosis of cell-surface receptors like the EGF receptor, contributing to its internalization in the absence of EGF stimulus. Facilitates endothelial front-rear polarity during migration by recruiting EHD4 and MICALL1 to asymmetric adherens junctions between leader and follower cells. The sequence is that of Protein kinase C and casein kinase substrate in neurons 2 protein (Pacsin2) from Rattus norvegicus (Rat).